The chain runs to 233 residues: U2 small nuclear ribonucleoprotein A' (233 aa).

4 LRR repeats span residues lysine 20–glutamine 40, lysine 42–phenylalanine 63, asparagine 65–serine 86, and histidine 89–lysine 110. The LRRCT domain maps to asparagine 122–methionine 160.

This sequence belongs to the U2 small nuclear ribonucleoprotein A family. Associated with the spliceosome.

It is found in the nucleus. Its function is as follows. Involved in pre-mRNA splicing. This Candida albicans (strain SC5314 / ATCC MYA-2876) (Yeast) protein is U2 small nuclear ribonucleoprotein A' (LEA1).